The sequence spans 189 residues: Selenoprotein S (189 aa).

Residues S28 to F48 traverse the membrane as a helical segment. Residues R78–Q90 are VCP/p97-interacting motif (VIM). The interval K115–G189 is disordered. At S140 the chain carries Phosphoserine. Over residues R159–A173 the composition is skewed to gly residues. U188 is a non-standard amino acid (selenocysteine).

Belongs to the selenoprotein S family. In terms of assembly, interacts with DERL1 and (via VIM motif) with VCP, suggesting that it forms a membrane complex with DERL1 that serves as a receptor for VCP. Also interacts with DERL2, DERL3 and SELENOK. The SELENOK-SELENOS complex interacts with VCP. Interacts with CCDC47. Truncated SELENOS proteins produced by failed UGA/Sec decoding are ubiquitinated by the CRL2(KLHDC2) and CRL2(KLHDC3) complexes, which recognizes the glycine (Gly) at the C-terminus of truncated SELENOS proteins. Truncated SELENOS proteins produced by failed UGA/Sec decoding are also ubiquitinated by the CRL5(KLHDC1) complex.

Its subcellular location is the endoplasmic reticulum membrane. It is found in the cytoplasm. Functionally, involved in the degradation process of misfolded endoplasmic reticulum (ER) luminal proteins. Participates in the transfer of misfolded proteins from the ER to the cytosol, where they are destroyed by the proteasome in a ubiquitin-dependent manner. Probably acts by serving as a linker between DERL1, which mediates the retrotranslocation of misfolded proteins into the cytosol, and the ATPase complex VCP, which mediates the translocation and ubiquitination. This chain is Selenoprotein S, found in Homo sapiens (Human).